The primary structure comprises 213 residues: Probable nicotinate-nucleotide adenylyltransferase (213 aa).

Residues 194 to 213 are disordered; sequence RKPNNGEAKDGDVKDEEAVR. Over residues 200–213 the composition is skewed to basic and acidic residues; sequence EAKDGDVKDEEAVR.

This sequence belongs to the NadD family.

It catalyses the reaction nicotinate beta-D-ribonucleotide + ATP + H(+) = deamido-NAD(+) + diphosphate. It functions in the pathway cofactor biosynthesis; NAD(+) biosynthesis; deamido-NAD(+) from nicotinate D-ribonucleotide: step 1/1. Catalyzes the reversible adenylation of nicotinate mononucleotide (NaMN) to nicotinic acid adenine dinucleotide (NaAD). The chain is Probable nicotinate-nucleotide adenylyltransferase from Mycolicibacterium smegmatis (strain ATCC 700084 / mc(2)155) (Mycobacterium smegmatis).